Reading from the N-terminus, the 101-residue chain is Ubiquitin-related modifier 1 homolog (101 aa).

Residue glycine 101 is modified to 1-thioglycine. Glycine 101 participates in a covalent cross-link: Glycyl lysine isopeptide (Gly-Lys) (interchain with K-? in acceptor proteins).

It belongs to the URM1 family. As to quaternary structure, interacts with cer. Post-translationally, C-terminal thiocarboxylation occurs in 2 steps, it is first acyl-adenylated (-COAMP) via the hesA/moeB/thiF part of the MOCS3 homolog, then thiocarboxylated (-COSH) via the rhodanese domain of the MOCS3 homolog.

Its subcellular location is the cytoplasm. It participates in tRNA modification; 5-methoxycarbonylmethyl-2-thiouridine-tRNA biosynthesis. Its function is as follows. Acts as a sulfur carrier required for 2-thiolation of mcm(5)S(2)U at tRNA wobble positions of cytosolic tRNA(Lys), tRNA(Glu) and tRNA(Gln). Serves as sulfur donor in tRNA 2-thiolation reaction by being thiocarboxylated (-COSH) at its C-terminus by MOCS3. The sulfur is then transferred to tRNA to form 2-thiolation of mcm(5)S(2)U. Also acts as a ubiquitin-like protein (UBL) that is covalently conjugated via an isopeptide bond to lysine residues of target proteins such as Prx2/Jafrac1, Ciao1, Eip71CD and GILT1. The thiocarboxylated form serves as substrate for conjugation and oxidative stress specifically induces the formation of UBL-protein conjugates. The protein is Ubiquitin-related modifier 1 homolog of Drosophila simulans (Fruit fly).